The chain runs to 277 residues: C2H2-type zinc-finger transcription factor (277 aa).

Disordered regions lie at residues 23–66 (PTMN…AHPP) and 78–146 (MNEP…TDSI). Over residues 27-37 (EIETTDNTYPR) the composition is skewed to polar residues. The C2H2-type; degenerate zinc finger occupies 185–208 (HPCPDCGRVFTRSTARNFHRQSGT).

Belongs to the GLI C2H2-type zinc-finger protein family.

Its subcellular location is the nucleus. Its function is as follows. C2H2-type zinc-finger transcription factor that controls the expression of the nonribosomal peptide synthases inpA and inpB, as well as of the other inp cluster-associated genes. Also mediates the expression of the asperfuranone biosynthesis gene cluster by binding to the afoA promoter. Probably recognizes the 5'-CT/C/AAAAGGAT/AT/GG/CA-3' motif in the promoters of teget genes. The chain is C2H2-type zinc-finger transcription factor from Emericella nidulans (strain FGSC A4 / ATCC 38163 / CBS 112.46 / NRRL 194 / M139) (Aspergillus nidulans).